Consider the following 420-residue polypeptide: Serine hydroxymethyltransferase (420 aa).

(6S)-5,6,7,8-tetrahydrofolate is bound by residues Leu-121 and 125–127 (GHL). N6-(pyridoxal phosphate)lysine is present on Lys-229.

The protein belongs to the SHMT family. Homodimer. Pyridoxal 5'-phosphate is required as a cofactor.

Its subcellular location is the cytoplasm. It carries out the reaction (6R)-5,10-methylene-5,6,7,8-tetrahydrofolate + glycine + H2O = (6S)-5,6,7,8-tetrahydrofolate + L-serine. It functions in the pathway one-carbon metabolism; tetrahydrofolate interconversion. The protein operates within amino-acid biosynthesis; glycine biosynthesis; glycine from L-serine: step 1/1. Its function is as follows. Catalyzes the reversible interconversion of serine and glycine with tetrahydrofolate (THF) serving as the one-carbon carrier. This reaction serves as the major source of one-carbon groups required for the biosynthesis of purines, thymidylate, methionine, and other important biomolecules. Also exhibits THF-independent aldolase activity toward beta-hydroxyamino acids, producing glycine and aldehydes, via a retro-aldol mechanism. This is Serine hydroxymethyltransferase from Pasteurella multocida (strain Pm70).